We begin with the raw amino-acid sequence, 347 residues long: DNA-directed RNA polymerase subunit alpha (347 aa).

The interval 1-230 is alpha N-terminal domain (alpha-NTD); sequence MFKGFQKPKR…DHMTIFINFE (230 aa). Positions 247–347 are alpha C-terminal domain (alpha-CTD); that stretch reads MNEVLNRSVE…EDDGQDQIGE (101 aa). The disordered stretch occupies residues 320–347; it reads GRLVAPPPSAGGGPDFGPEDDGQDQIGE. The span at 336–347 shows a compositional bias: acidic residues; sequence GPEDDGQDQIGE.

Belongs to the RNA polymerase alpha chain family. As to quaternary structure, homodimer. The RNAP catalytic core consists of 2 alpha, 1 beta, 1 beta' and 1 omega subunit. When a sigma factor is associated with the core the holoenzyme is formed, which can initiate transcription.

The catalysed reaction is RNA(n) + a ribonucleoside 5'-triphosphate = RNA(n+1) + diphosphate. Its function is as follows. DNA-dependent RNA polymerase catalyzes the transcription of DNA into RNA using the four ribonucleoside triphosphates as substrates. The polypeptide is DNA-directed RNA polymerase subunit alpha (Solibacter usitatus (strain Ellin6076)).